The chain runs to 218 residues: Stromal cell-derived factor 2-like protein (218 aa).

The N-terminal stretch at 1-21 (MALGFFCLAIFLYLSLDPDSG) is a signal peptide. 3 consecutive MIR domains span residues 34–88 (GVEI…VKPV), 96–151 (GDAV…LIIE), and 154–208 (GKTW…AAEG). A glycan (N-linked (GlcNAc...) asparagine) is linked at asparagine 214.

Interacts with ERDJ3B.

It is found in the endoplasmic reticulum. Functionally, involved in the endoplasmic reticulum (ER) protein quality control and unfolded protein response. May be involved in the quality control of glycoproteins. Forms a complex in the ER with ERDJ3B and MED37A/BIP1 which is required for the proper accumulation and function of the surface-exposed leucine-rich repeat receptor kinases EFR involved in pathogen-associated molecular pattern (PAMP) triggered immunity. The protein is Stromal cell-derived factor 2-like protein (SDF2) of Arabidopsis thaliana (Mouse-ear cress).